Consider the following 381-residue polypeptide: Neuropeptide Y receptor type 2 (381 aa).

The tract at residues 1–37 (MGPIGTEADENQTVEEIKVEPYGPGHTTPRGELAPDP) is disordered. Residues 1–52 (MGPIGTEADENQTVEEIKVEPYGPGHTTPRGELAPDPEPELIDSTKLTEVRV) are Extracellular-facing. Residue Asn-11 is glycosylated (N-linked (GlcNAc...) asparagine). Residues 53–73 (VLILAYCSIILLGVVGNSLVI) form a helical membrane-spanning segment. Topologically, residues 74–87 (HVVIKFKSMRTVTN) are cytoplasmic. A helical membrane pass occupies residues 88–108 (FFIANLAVADLLVNTLCLPFT). Topologically, residues 109–125 (LTYTLMGEWKMGPVLCH) are extracellular. Cys-124 and Cys-204 form a disulfide bridge. The helical transmembrane segment at 126-146 (LVPYAQGLAVQVSTVTLTVIA) threads the bilayer. At 147–166 (LDRHRCIVYHLDSKISKQNS) the chain is on the cytoplasmic side. Residues 167 to 187 (FLIIGLAWGISALLASPLAIF) form a helical membrane-spanning segment. Residues 188-217 (REYSLIEIIPDFEIVACTEKWPGEEKSIYG) are Extracellular-facing. Residues 218 to 238 (TVYSLSSLLILYVLPLGIISV) traverse the membrane as a helical segment. The Cytoplasmic portion of the chain corresponds to 239 to 269 (SYVRIWSKLKNHVSPGAANDHYHQRRQKTTK). The chain crosses the membrane as a helical span at residues 270 to 290 (MLVFVVVVFAVSWLPLHAFQL). The Extracellular portion of the chain corresponds to 291–305 (AVDIDSQVLDLKEYK). The helical transmembrane segment at 306-326 (LIFTVFHIIAMCSTFANPLLY) threads the bilayer. Residues 327-381 (GWMNSNYRKAFLSAFRCQQRLDAIQSEVCVTGKAKTNVEVEKNHGAADSAEATNV) are Cytoplasmic-facing. Cys-343 carries S-palmitoyl cysteine lipidation.

The protein belongs to the G-protein coupled receptor 1 family.

The protein localises to the cell membrane. In terms of biological role, receptor for neuropeptide Y and peptide YY. The protein is Neuropeptide Y receptor type 2 (NPY2R) of Cavia porcellus (Guinea pig).